The following is a 144-amino-acid chain: Cytochrome c oxidase subunit 4 isoform 1, mitochondrial (144 aa).

At 1–73 (SVVKSEDYTL…SFAEMNRGSN (73 aa)) the chain is on the mitochondrial matrix side. The residue at position 4 (K4) is an N6-acetyllysine; alternate. N6-succinyllysine; alternate is present on K4. Phosphoserine occurs at positions 31 and 33. Residue K35 is modified to N6-acetyllysine; alternate. K35 bears the N6-succinyllysine; alternate mark. K42 bears the N6-acetyllysine mark. The chain crosses the membrane as a helical span at residues 74-99 (EWKTVVGAAMFFIGFTAILIMLEKRY). Residues 100–144 (VYGPLPHTFDKEWVAMQTKRMLDLKVNPVDGLASKWDYEKKEWKK) lie on the Mitochondrial intermembrane side of the membrane.

The protein belongs to the cytochrome c oxidase IV family. As to quaternary structure, component of the cytochrome c oxidase (complex IV, CIV), a multisubunit enzyme composed of 14 subunits. The complex is composed of a catalytic core of 3 subunits MT-CO1, MT-CO2 and MT-CO3, encoded in the mitochondrial DNA, and 11 supernumerary subunits COX4I, COX5A, COX5B, COX6A, COX6B, COX6C, COX7A, COX7B, COX7C, COX8 and NDUFA4, which are encoded in the nuclear genome. The complex exists as a monomer or a dimer and forms supercomplexes (SCs) in the inner mitochondrial membrane with NADH-ubiquinone oxidoreductase (complex I, CI) and ubiquinol-cytochrome c oxidoreductase (cytochrome b-c1 complex, complex III, CIII), resulting in different assemblies (supercomplex SCI(1)III(2)IV(1) and megacomplex MCI(2)III(2)IV(2)). Interacts with PHB2; the interaction decreases in absence of SPHK2. Interacts with AFG1L. Interacts with ABCB7; this interaction allows the regulation of cellular iron homeostasis and cellular reactive oxygen species (ROS) levels in cardiomyocytes. Interacts with FLVCR2; this interaction occurs in the absence of heme and is disrupted upon heme binding. Interacts with IRGC.

The protein localises to the mitochondrion inner membrane. It functions in the pathway energy metabolism; oxidative phosphorylation. Functionally, component of the cytochrome c oxidase, the last enzyme in the mitochondrial electron transport chain which drives oxidative phosphorylation. The respiratory chain contains 3 multisubunit complexes succinate dehydrogenase (complex II, CII), ubiquinol-cytochrome c oxidoreductase (cytochrome b-c1 complex, complex III, CIII) and cytochrome c oxidase (complex IV, CIV), that cooperate to transfer electrons derived from NADH and succinate to molecular oxygen, creating an electrochemical gradient over the inner membrane that drives transmembrane transport and the ATP synthase. Cytochrome c oxidase is the component of the respiratory chain that catalyzes the reduction of oxygen to water. Electrons originating from reduced cytochrome c in the intermembrane space (IMS) are transferred via the dinuclear copper A center (CU(A)) of subunit 2 and heme A of subunit 1 to the active site in subunit 1, a binuclear center (BNC) formed by heme A3 and copper B (CU(B)). The BNC reduces molecular oxygen to 2 water molecules using 4 electrons from cytochrome c in the IMS and 4 protons from the mitochondrial matrix. The sequence is that of Cytochrome c oxidase subunit 4 isoform 1, mitochondrial (COX4I1) from Pithecia pithecia (White-faced saki).